The sequence spans 502 residues: ATP synthase subunit alpha (502 aa).

Residue G169–T176 participates in ATP binding.

The protein belongs to the ATPase alpha/beta chains family. As to quaternary structure, F-type ATPases have 2 components, CF(1) - the catalytic core - and CF(0) - the membrane proton channel. CF(1) has five subunits: alpha(3), beta(3), gamma(1), delta(1), epsilon(1). CF(0) has three main subunits: a(1), b(2) and c(9-12). The alpha and beta chains form an alternating ring which encloses part of the gamma chain. CF(1) is attached to CF(0) by a central stalk formed by the gamma and epsilon chains, while a peripheral stalk is formed by the delta and b chains.

Its subcellular location is the cell membrane. The catalysed reaction is ATP + H2O + 4 H(+)(in) = ADP + phosphate + 5 H(+)(out). In terms of biological role, produces ATP from ADP in the presence of a proton gradient across the membrane. The alpha chain is a regulatory subunit. This chain is ATP synthase subunit alpha, found in Exiguobacterium sp. (strain ATCC BAA-1283 / AT1b).